We begin with the raw amino-acid sequence, 413 residues long: Replication factor C large subunit (413 aa).

54 to 61 (GPPGSGKT) contributes to the ATP binding site.

It belongs to the activator 1 small subunits family. RfcL subfamily. In terms of assembly, heteromultimer composed of small subunits (RfcS) and large subunits (RfcL).

Its function is as follows. Part of the RFC clamp loader complex which loads the PCNA sliding clamp onto DNA. This is Replication factor C large subunit from Thermofilum pendens (strain DSM 2475 / Hrk 5).